Reading from the N-terminus, the 556-residue chain is Glutamine--tRNA ligase (556 aa).

Positions 34 to 44 (PEPNGYLHIGH) match the 'HIGH' region motif. ATP contacts are provided by residues 35–37 (EPN) and 41–47 (HIGHAKS). Positions 67 and 212 each coordinate L-glutamine. Residues threonine 231, 261 to 262 (RL), and 269 to 271 (MSK) each bind ATP. Residues 268–272 (VMSKR) carry the 'KMSKS' region motif.

It belongs to the class-I aminoacyl-tRNA synthetase family. Monomer.

Its subcellular location is the cytoplasm. It catalyses the reaction tRNA(Gln) + L-glutamine + ATP = L-glutaminyl-tRNA(Gln) + AMP + diphosphate. The sequence is that of Glutamine--tRNA ligase from Vibrio campbellii (strain ATCC BAA-1116).